Here is a 380-residue protein sequence, read N- to C-terminus: Chaperone protein DnaJ (380 aa).

The 66-residue stretch at 5-70 (DYYEVLGVER…SKRAAYDQYG (66 aa)) folds into the J domain. The CR-type zinc finger occupies 139 to 217 (GTNVNIRVPT…CHGEGRVEES (79 aa)). Positions 152, 155, 169, 172, 191, 194, 205, and 208 each coordinate Zn(2+). CXXCXGXG motif repeat units follow at residues 152 to 159 (CKPCDGSG), 169 to 176 (CPTCGGIG), 191 to 198 (CPRCHGHG), and 205 to 212 (CDSCHGEG). Positions 224–245 (VPPGVDTGDRIRLSGEGEAGTQ) are disordered.

Belongs to the DnaJ family. In terms of assembly, homodimer. Zn(2+) is required as a cofactor.

Its subcellular location is the cytoplasm. In terms of biological role, participates actively in the response to hyperosmotic and heat shock by preventing the aggregation of stress-denatured proteins and by disaggregating proteins, also in an autonomous, DnaK-independent fashion. Unfolded proteins bind initially to DnaJ; upon interaction with the DnaJ-bound protein, DnaK hydrolyzes its bound ATP, resulting in the formation of a stable complex. GrpE releases ADP from DnaK; ATP binding to DnaK triggers the release of the substrate protein, thus completing the reaction cycle. Several rounds of ATP-dependent interactions between DnaJ, DnaK and GrpE are required for fully efficient folding. Also involved, together with DnaK and GrpE, in the DNA replication of plasmids through activation of initiation proteins. This Pseudomonas syringae pv. syringae (strain B728a) protein is Chaperone protein DnaJ.